The chain runs to 257 residues: UPF0246 protein Shew185_1115 (257 aa).

Belongs to the UPF0246 family.

This Shewanella baltica (strain OS185) protein is UPF0246 protein Shew185_1115.